Here is a 69-residue protein sequence, read N- to C-terminus: Cell division protein ZapB (69 aa).

Positions 6-68 (LEQLEARVQS…LGKMDQMNSE (63 aa)) form a coiled coil.

Belongs to the ZapB family. Homodimer. The ends of the coiled-coil dimer bind to each other, forming polymers. Interacts with FtsZ.

It is found in the cytoplasm. In terms of biological role, non-essential, abundant cell division factor that is required for proper Z-ring formation. It is recruited early to the divisome by direct interaction with FtsZ, stimulating Z-ring assembly and thereby promoting cell division earlier in the cell cycle. Its recruitment to the Z-ring requires functional FtsA or ZipA. This Tolumonas auensis (strain DSM 9187 / NBRC 110442 / TA 4) protein is Cell division protein ZapB.